A 231-amino-acid polypeptide reads, in one-letter code: Acyl-protein thioesterase 2 (231 aa).

The S-palmitoyl cysteine moiety is linked to residue C2. At S82 the chain carries Phosphoserine. Catalysis depends on charge relay system residues S122, D176, and H210.

It belongs to the AB hydrolase superfamily. AB hydrolase 2 family. Ubiquitous; detected at low levels.

It is found in the cytoplasm. It carries out the reaction S-hexadecanoyl-L-cysteinyl-[protein] + H2O = L-cysteinyl-[protein] + hexadecanoate + H(+). The catalysed reaction is prostaglandin E2 1-glyceryl ester + H2O = prostaglandin E2 + glycerol + H(+). It catalyses the reaction 1-hexadecanoyl-sn-glycero-3-phosphocholine + H2O = sn-glycerol 3-phosphocholine + hexadecanoate + H(+). The enzyme catalyses 1-octadecanoyl-sn-glycero-3-phosphocholine + H2O = octadecanoate + sn-glycerol 3-phosphocholine + H(+). It carries out the reaction 1-hexadecanoyl-sn-glycero-3-phosphate + H2O = sn-glycerol 3-phosphate + hexadecanoate + H(+). The catalysed reaction is 1-hexadecanoyl-sn-glycero-3-phospho-L-serine + H2O = sn-glycero-3-phospho-L-serine + hexadecanoate + H(+). Functionally, acts as an acyl-protein thioesterase hydrolyzing fatty acids from S-acylated cysteine residues in proteins such as trimeric G alpha proteins, GSDMD, GAP43, ZDHHC6 or HRAS. Deacylates GAP43. Mediates depalmitoylation of ZDHHC6. Has lysophospholipase activity. Hydrolyzes prostaglandin glycerol esters (PG-Gs). Hydrolyzes PG-Gs in the following order prostaglandin D2-glycerol ester (PGD2-G) &gt; prostaglandin E2 glycerol ester (PGE2-G) &gt; prostaglandin F2-alpha-glycerol ester (PGF2-alpha-G). Hydrolyzes 1-arachidonoylglycerol but not 2-arachidonoylglycerol or arachidonoylethanolamide. This is Acyl-protein thioesterase 2 (Lypla2) from Mus musculus (Mouse).